The primary structure comprises 207 residues: Protein FAM177A1 (207 aa).

N-acetylmethionine is present on M1. Residue S65 is modified to Phosphoserine. T66 is subject to Phosphothreonine. Residues 131-170 (IDEYYRMKKEEEEEEEENRMSEEAERQYQQNKLQADSIVQ) adopt a coiled-coil conformation. A disordered region spans residues 142–176 (EEEEEENRMSEEAERQYQQNKLQADSIVQTDQPET). Polar residues predominate over residues 157-176 (QYQQNKLQADSIVQTDQPET).

This sequence belongs to the FAM177 family.

The sequence is that of Protein FAM177A1 (Fam177a1) from Mus musculus (Mouse).